The primary structure comprises 179 residues: Repressor of phase 1 flagellin gene (179 aa).

Transcriptional repressor of the FliC phase-1 flagellin. The sequence is that of Repressor of phase 1 flagellin gene (fljA) from Salmonella typhimurium (strain LT2 / SGSC1412 / ATCC 700720).